The primary structure comprises 494 residues: GTPase Der (494 aa).

EngA-type G domains are found at residues 3–166 (PVVA…VGEK) and 208–381 (IKLA…ECAT). GTP is bound by residues 9 to 16 (GRPNVGKS), 56 to 60 (DTGGI), 118 to 121 (NKTD), 214 to 221 (GRPNVGKS), 261 to 265 (DTAGV), and 326 to 329 (NKWD). Residues 382–466 (RRVNTSMLTK…PIRIQFKEGE (85 aa)) enclose the KH-like domain.

This sequence belongs to the TRAFAC class TrmE-Era-EngA-EngB-Septin-like GTPase superfamily. EngA (Der) GTPase family. In terms of assembly, associates with the 50S ribosomal subunit.

GTPase that plays an essential role in the late steps of ribosome biogenesis. The protein is GTPase Der of Serratia proteamaculans (strain 568).